Here is a 443-residue protein sequence, read N- to C-terminus: MKFAHIADVHLGYEQYNQPWRAEDFAKAFKVIAEKAVESNADFVVIAGDLFHRSLPSPRTIKEAVETLWMFRKENIPVFAVEGNHDKTSRDISAYHLLESLGLLNVLGLRRNPVRGENVESLRIQNVYLVKGVVDDVEILGDRHRSKWQLEKVLPLLKPQSDKSVLVLHQAVKEVVDIDLDMAYELTINDLPEASYYAFGHIHLPKIYEFDGKAIAYPGSVERYDLREASKIVRYRDELVLKDGIRKGFILVKNFRPEFVEIETRELYDVEIEDESVEGLEKKFLEVLGRADKEGIMVAKLKSSDAVDVRRLSEVAAKRVRYAEIRFERILEEIEEVEIKQESEFFTEFELKLLELLRGEMDEDEVYSLVVEHYLSGGALKQEEGAEERVVEEETEKKVEEQFKGDEEADEAERRAEETEKAKSTKKARKPKTLLDFLGVEEE.

Mn(2+) contacts are provided by Asp-8, His-10, Asp-49, and Asn-84. His-85 functions as the Proton donor in the catalytic mechanism. Positions 169, 201, and 203 each coordinate Mn(2+). A disordered region spans residues 382–429 (QEEGAEERVVEEETEKKVEEQFKGDEEADEAERRAEETEKAKSTKKAR). The span at 395–423 (TEKKVEEQFKGDEEADEAERRAEETEKAK) shows a compositional bias: basic and acidic residues.

Belongs to the MRE11/RAD32 family. As to quaternary structure, homodimer. Forms a heterotetramer composed of two Mre11 subunits and two Rad50 subunits. Mn(2+) serves as cofactor.

With respect to regulation, nuclease activity is regulated by Rad50. Functionally, part of the Rad50/Mre11 complex, which is involved in the early steps of DNA double-strand break (DSB) repair. The complex may facilitate opening of the processed DNA ends to aid in the recruitment of HerA and NurA. Mre11 binds to DSB ends and has both double-stranded 3'-5' exonuclease activity and single-stranded endonuclease activity. The polypeptide is DNA double-strand break repair protein Mre11 (Archaeoglobus fulgidus (strain ATCC 49558 / DSM 4304 / JCM 9628 / NBRC 100126 / VC-16)).